Here is a 467-residue protein sequence, read N- to C-terminus: Phosphoglucosamine mutase (467 aa).

Catalysis depends on serine 120, which acts as the Phosphoserine intermediate. The Mg(2+) site is built by serine 120, aspartate 261, aspartate 263, and aspartate 265. Serine 120 carries the phosphoserine modification.

It belongs to the phosphohexose mutase family. It depends on Mg(2+) as a cofactor. In terms of processing, activated by phosphorylation.

The catalysed reaction is alpha-D-glucosamine 1-phosphate = D-glucosamine 6-phosphate. Functionally, catalyzes the conversion of glucosamine-6-phosphate to glucosamine-1-phosphate. The protein is Phosphoglucosamine mutase of Parafrankia sp. (strain EAN1pec).